Reading from the N-terminus, the 626-residue chain is UvrABC system protein C (626 aa).

Residues 26–105 enclose the GIY-YIG domain; sequence PEPGVYFMRD…IKQHQPHFNV (80 aa). Residues 215 to 250 enclose the UVR domain; the sequence is SELINTLSLQMEQAAEDLNFEQAARLRDQIKGLQGL.

This sequence belongs to the UvrC family. Interacts with UvrB in an incision complex.

The protein localises to the cytoplasm. The UvrABC repair system catalyzes the recognition and processing of DNA lesions. UvrC both incises the 5' and 3' sides of the lesion. The N-terminal half is responsible for the 3' incision and the C-terminal half is responsible for the 5' incision. The polypeptide is UvrABC system protein C (Acaryochloris marina (strain MBIC 11017)).